We begin with the raw amino-acid sequence, 71 residues long: MPIIKVRENEPFDVALRRFKRSCEKAGILADVRAREFYEKPTTARKRAKAAAVKRLAKKLSRENARRVRLY.

It belongs to the bacterial ribosomal protein bS21 family.

This is Small ribosomal subunit protein bS21 from Shewanella sp. (strain MR-4).